The sequence spans 188 residues: Peptidyl-tRNA hydrolase (188 aa).

Y14 lines the tRNA pocket. Residue H19 is the Proton acceptor of the active site. 3 residues coordinate tRNA: Y64, N66, and N112.

It belongs to the PTH family. In terms of assembly, monomer.

Its subcellular location is the cytoplasm. It carries out the reaction an N-acyl-L-alpha-aminoacyl-tRNA + H2O = an N-acyl-L-amino acid + a tRNA + H(+). Functionally, hydrolyzes ribosome-free peptidyl-tRNAs (with 1 or more amino acids incorporated), which drop off the ribosome during protein synthesis, or as a result of ribosome stalling. In terms of biological role, catalyzes the release of premature peptidyl moieties from peptidyl-tRNA molecules trapped in stalled 50S ribosomal subunits, and thus maintains levels of free tRNAs and 50S ribosomes. Releases Ala-tailed nascent peptides from stalled 50S ribosomal subunits. Non-templated Ala tailing occurs as part of the ribosome quality control (RQC) pathway. In the absence of Ala tails significantly less peptide release occurs. The Ala tail facilitates the interaction of Pth with the nascent peptide-tRNA ester bond as well as promoting nascent chain degradation; 3 Ala residues suffice to stimulate peptide release from stalled 50S ribosomal subunits. Complements a temperature-sensitive pth mutation in E.coli. This chain is Peptidyl-tRNA hydrolase, found in Bacillus subtilis (strain 168).